The following is a 451-amino-acid chain: tRNA-2-methylthio-N(6)-dimethylallyladenosine synthase (451 aa).

Positions 3 to 120 constitute an MTTase N-terminal domain; sequence KKLFIQTHGC…LPEMVNAAGK (118 aa). [4Fe-4S] cluster contacts are provided by C12, C49, C83, C156, C160, and C163. The region spanning 142–374 is the Radical SAM core domain; it reads RVEGAEAFVS…QRRISQQAYD (233 aa). The 65-residue stretch at 377–441 folds into the TRAM domain; it reads LSMVGEVQRI…PNSLLGELVG (65 aa).

Belongs to the methylthiotransferase family. MiaB subfamily. As to quaternary structure, monomer. [4Fe-4S] cluster is required as a cofactor.

It localises to the cytoplasm. The enzyme catalyses N(6)-dimethylallyladenosine(37) in tRNA + (sulfur carrier)-SH + AH2 + 2 S-adenosyl-L-methionine = 2-methylsulfanyl-N(6)-dimethylallyladenosine(37) in tRNA + (sulfur carrier)-H + 5'-deoxyadenosine + L-methionine + A + S-adenosyl-L-homocysteine + 2 H(+). Its function is as follows. Catalyzes the methylthiolation of N6-(dimethylallyl)adenosine (i(6)A), leading to the formation of 2-methylthio-N6-(dimethylallyl)adenosine (ms(2)i(6)A) at position 37 in tRNAs that read codons beginning with uridine. The protein is tRNA-2-methylthio-N(6)-dimethylallyladenosine synthase of Marinomonas sp. (strain MWYL1).